The chain runs to 479 residues: ESX-1 secretion system ATPase EccB1 (479 aa).

The Cytoplasmic segment spans residues methionine 1–alanine 44. Residues valine 45–phenylalanine 65 traverse the membrane as a helical segment. At lysine 66–glycine 479 the chain is on the periplasmic side. The cysteines at positions 152 and 347 are disulfide-linked.

The protein belongs to the EccB family. As to quaternary structure, part of the ESX-1 / type VII secretion system (T7SS), which is composed of cytosolic and membrane components. The ESX-1 membrane complex is composed of EccB1, EccCa1, EccCb1, EccD1 and EccE1.

The protein localises to the cell inner membrane. An ATPase. Part of the ESX-1 / type VII specialized secretion system (T7SS), which exports several proteins including EsxA and EsxB. Plays a role in DNA conjugation, in both donor and recipient strains. The polypeptide is ESX-1 secretion system ATPase EccB1 (Mycolicibacterium smegmatis (strain MKD8) (Mycobacterium smegmatis)).